We begin with the raw amino-acid sequence, 436 residues long: UDP-N-acetylglucosamine 1-carboxyvinyltransferase (436 aa).

Phosphoenolpyruvate is bound at residue 22–23 (KN). R96 lines the UDP-N-acetyl-alpha-D-glucosamine pocket. Catalysis depends on C120, which acts as the Proton donor. C120 carries the post-translational modification 2-(S-cysteinyl)pyruvic acid O-phosphothioketal. UDP-N-acetyl-alpha-D-glucosamine contacts are provided by residues 125 to 129 (RPIDL), D309, and I331.

The protein belongs to the EPSP synthase family. MurA subfamily.

The protein localises to the cytoplasm. It catalyses the reaction phosphoenolpyruvate + UDP-N-acetyl-alpha-D-glucosamine = UDP-N-acetyl-3-O-(1-carboxyvinyl)-alpha-D-glucosamine + phosphate. The protein operates within cell wall biogenesis; peptidoglycan biosynthesis. Cell wall formation. Adds enolpyruvyl to UDP-N-acetylglucosamine. This Acidobacterium capsulatum (strain ATCC 51196 / DSM 11244 / BCRC 80197 / JCM 7670 / NBRC 15755 / NCIMB 13165 / 161) protein is UDP-N-acetylglucosamine 1-carboxyvinyltransferase.